The sequence spans 334 residues: MAGGAAEAAAAVVEVGSSGQFEELLRLRAKSLLVVHFWAPWAPQCAQMNDVMAELAKEHQQVSFVKLEAEAVPEVSEKYEISSVPTFLFFKNSQKIDRLDGAHAPELTKKVQRHASSGSFSPSGSEHPKEDLSLRLKKLTHAAPCMLFMKGTPQEPRCGFSKQMVEILNKHNIQFSSFDIFSDEEVRQGLKTYSSWPTYPQLYVSGELIGGLDIIKELEASKELDTICPKAPKLEERLKVLTNKASVMLFMKGNKQEAKCGFSRQILEILNSTGIEYETFDILEDEEVRQGLKAYSNWPTYPQLYVKGELVGGLDIVKELKENGELLPILKGEN.

At A2 the chain carries N-acetylalanine. Residues 2-116 enclose the Thioredoxin domain; the sequence is AGGAAEAAAA…LTKKVQRHAS (115 aa). A disordered region spans residues 110–131; the sequence is KVQRHASSGSFSPSGSEHPKED. Residues S116 and S119 each carry the phosphoserine modification. Positions 116–125 are enriched in low complexity; sequence SSGSFSPSGS. Glutaredoxin domains follow at residues 145 to 235 and 236 to 334; these read CMLF…PKLE and ERLK…KGEN. 2 residues coordinate [2Fe-2S] cluster: C158 and C260.

In terms of assembly, homodimer; the homodimer is independent of 2Fe-2S clusters. Heterotrimer; forms a heterotrimeric complex composed by two BOLA2 molecules and one GLRX3 molecule; linked by [2Fe-2S] clusters. Interacts (via N-terminus) with PRKCQ/PKC-theta. Interacts (via C-terminus) with CSRP3. Interacts with CSRP2.

It localises to the cytoplasm. Its subcellular location is the cytosol. It is found in the cell cortex. The protein resides in the myofibril. The protein localises to the sarcomere. It localises to the z line. In terms of biological role, together with BOLA2, acts as a cytosolic iron-sulfur (Fe-S) cluster assembly factor that facilitates [2Fe-2S] cluster insertion into a subset of cytosolic proteins. Acts as a critical negative regulator of cardiac hypertrophy and a positive inotropic regulator. Required for hemoglobin maturation. Does not possess any thyoredoxin activity since it lacks the conserved motif that is essential for catalytic activity. In Bos taurus (Bovine), this protein is Glutaredoxin-3 (GLRX3).